A 149-amino-acid polypeptide reads, in one-letter code: D-aminoacyl-tRNA deacylase (149 aa).

Positions 137 to 138 (GP) match the Gly-cisPro motif, important for rejection of L-amino acids motif.

This sequence belongs to the DTD family. Homodimer.

The protein resides in the cytoplasm. It catalyses the reaction glycyl-tRNA(Ala) + H2O = tRNA(Ala) + glycine + H(+). The enzyme catalyses a D-aminoacyl-tRNA + H2O = a tRNA + a D-alpha-amino acid + H(+). Its function is as follows. An aminoacyl-tRNA editing enzyme that deacylates mischarged D-aminoacyl-tRNAs. Also deacylates mischarged glycyl-tRNA(Ala), protecting cells against glycine mischarging by AlaRS. Acts via tRNA-based rather than protein-based catalysis; rejects L-amino acids rather than detecting D-amino acids in the active site. By recycling D-aminoacyl-tRNA to D-amino acids and free tRNA molecules, this enzyme counteracts the toxicity associated with the formation of D-aminoacyl-tRNA entities in vivo and helps enforce protein L-homochirality. In Janthinobacterium sp. (strain Marseille) (Minibacterium massiliensis), this protein is D-aminoacyl-tRNA deacylase.